The primary structure comprises 342 residues: UDP-N-acetylglucosamine transporter YEA4 (342 aa).

At 1–6 (MWNSLK) the chain is on the cytoplasmic side. The helical transmembrane segment at 7 to 27 (AFALVFGGCCSNVITFETLMS) threads the bilayer. At 28–35 (NETGSINN) the chain is on the lumenal side. The helical transmembrane segment at 36-56 (LITFCQFLFVTCQGLPEFLDV) threads the bilayer. The Cytoplasmic portion of the chain corresponds to 57–61 (HQPFP). Residues 62 to 82 (YFKPLKTPLHVYVITVVLFYI) traverse the membrane as a helical segment. At 83–96 (SSTTNNNVFKYNIS) the chain is on the lumenal side. A helical membrane pass occupies residues 97–117 (IPIHIVFRCFGTVITMFTCWL). The Cytoplasmic segment spans residues 118–123 (LNGRKY). A helical membrane pass occupies residues 124-144 (TKIQILSTLFLTIGAIIASLF). The Lumenal segment spans residues 145–168 (KDADFRYQDLKLQAWKIGSDQSVD). A helical transmembrane segment spans residues 169 to 189 (LTFIFGICILVLSSFTSSLLS). The Cytoplasmic segment spans residues 190 to 253 (AYNERTYQKY…GGKILVPREE (64 aa)). The chain crosses the membrane as a helical span at residues 254–274 (TLLLFNVLTQYFCVKGVNILA). At 275–307 (SKTNALTLSITLLVRKFISLLLSVRLFDNNLSY) the chain is on the lumenal side. Residues 308 to 328 (TGYIGVYLVFFGAFIYSLGSI) traverse the membrane as a helical segment. The Cytoplasmic portion of the chain corresponds to 329–342 (HPRQNDKGAIKKSK).

The protein belongs to the nucleotide-sugar transporter family. SLC35B subfamily.

The protein localises to the endoplasmic reticulum. The protein resides in the endoplasmic reticulum membrane. Its function is as follows. Sugar transporter that specifically mediates the transport of UDP-N-acetylglucosamine (UDP-GlcNAc) and is required for cell wall chitin synthesis. This Saccharomyces cerevisiae (strain ATCC 204508 / S288c) (Baker's yeast) protein is UDP-N-acetylglucosamine transporter YEA4 (YEA4).